The chain runs to 305 residues: Ornithine carbamoyltransferase (305 aa).

Carbamoyl phosphate contacts are provided by residues 52–55 (STRT), Gln-79, Arg-103, and 130–133 (HPCQ). Residues Asn-161, Asp-222, and 226–227 (SM) contribute to the L-ornithine site. Residues 262-263 (CL) and Arg-290 contribute to the carbamoyl phosphate site.

The protein belongs to the aspartate/ornithine carbamoyltransferase superfamily. OTCase family.

It localises to the cytoplasm. The enzyme catalyses carbamoyl phosphate + L-ornithine = L-citrulline + phosphate + H(+). The protein operates within amino-acid biosynthesis; L-arginine biosynthesis; L-arginine from L-ornithine and carbamoyl phosphate: step 1/3. Reversibly catalyzes the transfer of the carbamoyl group from carbamoyl phosphate (CP) to the N(epsilon) atom of ornithine (ORN) to produce L-citrulline. This Pelobacter propionicus (strain DSM 2379 / NBRC 103807 / OttBd1) protein is Ornithine carbamoyltransferase.